Consider the following 459-residue polypeptide: Exodeoxyribonuclease 7 large subunit (459 aa).

Belongs to the XseA family. In terms of assembly, heterooligomer composed of large and small subunits.

Its subcellular location is the cytoplasm. It carries out the reaction Exonucleolytic cleavage in either 5'- to 3'- or 3'- to 5'-direction to yield nucleoside 5'-phosphates.. Functionally, bidirectionally degrades single-stranded DNA into large acid-insoluble oligonucleotides, which are then degraded further into small acid-soluble oligonucleotides. The chain is Exodeoxyribonuclease 7 large subunit from Pseudomonas fluorescens (strain ATCC BAA-477 / NRRL B-23932 / Pf-5).